Here is a 127-residue protein sequence, read N- to C-terminus: MYPHLTGLGIHDPKQIERYSLRQEAHKDVLKIYFHKQKGEFFAKSVKFKYPRQVKNVLVDSGSHKYKEVTEINRNLTLVIDELNKITKPAKVSELDVKQKILSDLRHLEKVVSSKIAEIEADLEKLK.

The protein belongs to the UPF0325 family.

In Vibrio parahaemolyticus serotype O3:K6 (strain RIMD 2210633), this protein is UPF0325 protein VP2321.